The following is a 681-amino-acid chain: Type VI secretion system spike protein VgrG1 (681 aa).

The tract at residues 621–640 is disordered; it reads NSGGSPSSGSGWGGKSPVDP.

Belongs to the VgrG protein family.

It is found in the secreted. It carries out the reaction L-arginyl-[protein] + NAD(+) = N(omega)-(ADP-D-ribosyl)-L-arginyl-[protein] + nicotinamide + H(+). Its function is as follows. Part of the type VI secretion system specialized secretion system, which delivers several virulence factors in both prokaryotic and eukaryotic cells during infection. Acts directly as an secreted effector with an actin ADP-ribosyltransferase activity that disrupts the host actin cytoskeleton, leading to a decrease in host cell viability and an increase in apoptosis. The protein is Type VI secretion system spike protein VgrG1 (vgrG1) of Aeromonas hydrophila.